We begin with the raw amino-acid sequence, 416 residues long: 46 kDa surface antigen (416 aa).

A signal peptide spans 1-27 (MLRKKFLYSSAIYATSLASIIAFVAAG). A lipid anchor (N-palmitoyl cysteine) is attached at cysteine 28. A lipid anchor (S-diacylglycerol cysteine) is attached at cysteine 28.

Its subcellular location is the cell membrane. The sequence is that of 46 kDa surface antigen (p46) from Mesomycoplasma hyopneumoniae (strain 232) (Mycoplasma hyopneumoniae).